The following is a 314-amino-acid chain: Olfactory receptor 2Z1 (314 aa).

The Extracellular segment spans residues 1 to 25; that stretch reads MGDVNQSVASDFILVGLFSHSGSRQ. The N-linked (GlcNAc...) asparagine glycan is linked to asparagine 5. Residues 26 to 49 traverse the membrane as a helical segment; the sequence is LLFSLVAVMFVIGLLGNTVLLFLI. Residues 50–57 lie on the Cytoplasmic side of the membrane; the sequence is RVDSRLHT. Residues 58-79 form a helical membrane-spanning segment; the sequence is PMYFLLSQLSLFDIGCPMVTIP. The Extracellular portion of the chain corresponds to 80–100; sequence KMASDFLRGEGATSYGGGAAQ. The chain crosses the membrane as a helical span at residues 101 to 120; that stretch reads IFFLTLMGVAEGVLLVLMSY. Over 121-139 the chain is Cytoplasmic; that stretch reads DRYVAVCQPLQYPVLMRRQ. Residues 140-158 traverse the membrane as a helical segment; it reads VCLLMMGSSWVVGVLNASI. Residues 159-195 lie on the Extracellular side of the membrane; sequence QTSITLHFPYCASRIVDHFFCEVPALLKLSCADTCAY. A helical membrane pass occupies residues 196–219; the sequence is EMALSTSGVLILMLPLSLIATSYG. The Cytoplasmic portion of the chain corresponds to 220–236; sequence HVLQAVLSMRSEEARHK. The helical transmembrane segment at 237–259 threads the bilayer; it reads AVTTCSSHITVVGLFYGAAVFMY. The Extracellular portion of the chain corresponds to 260 to 272; sequence MVPCAYHSPQQDN. A helical membrane pass occupies residues 273 to 292; sequence VVSLFYSLVTPTLNPLIYSL. Residues 293–314 lie on the Cytoplasmic side of the membrane; that stretch reads RNPEVWMALVKVLSRAGLRQMC.

This sequence belongs to the G-protein coupled receptor 1 family.

The protein localises to the cell membrane. In terms of biological role, odorant receptor. This is Olfactory receptor 2Z1 (OR2Z1) from Homo sapiens (Human).